A 316-amino-acid chain; its full sequence is Transcription initiation factor IIB (316 aa).

The TFIIB-type zinc-finger motif lies at 11-42 (PRVTCPNHPDAILVEDYRAGDMICPECGLVVG). 4 residues coordinate Zn(2+): cysteine 15, histidine 18, cysteine 34, and cysteine 37. Phosphoserine occurs at positions 70, 76, and 92. Repeat copies occupy residues 124 to 200 (MADR…LILK) and 218 to 294 (FCSN…LIYP). DNA is bound by residues lysine 152, arginine 154, lysine 189, and lysine 196. A core promoter DNA-binding region spans residues 189 to 193 (KEIGR). At lysine 238 the chain carries N6-acetyllysine; by autocatalysis. The interval 244 to 316 (LVPGRSPISV…DTPVDKLPQL (73 aa)) is necessary for TATA box-bound complex TBP formation. Arginine 248 contacts DNA. The interval 249–252 (SPIS) is core promoter DNA-binding. Lysine 272, alanine 281, threonine 284, arginine 286, and arginine 290 together coordinate DNA. The core promoter DNA-binding stretch occupies residues 283–286 (VTIR).

Belongs to the TFIIB family. In terms of assembly, found in a ternary complex with TATA box-bound TBP. Part of a TFIID-containing RNA polymerase II pre-initiation complex (PIC) that is composed of TBP and at least GTF2A1, GTF2A2, GTF2E1, GTF2E2, GTF2F1, GTF2H2, GTF2H3, GTF2H4, GTF2H5, GTF2B, TCEA1, ERCC2, ERCC3, TAF1, TAF2, TAF3, TAF4, TAF5, TAF6, TAF7, TAF8, TAF9, TAF10, TAF11, TAF12 and TAF13. Associates with TFIID-TFIIA (DA complex) to form TFIID-TFIIA-TFIIB (DAB complex), which is then recognized by RNA polymerase II (Pol II). Found in a RNA polymerase II initiation complex. Interacts (via C-terminus) with TBP; this interaction with TATA box-bound TBP guides Pol II into the PIC. Interacts (via N-terminus) with Pol II. Interacts (via C-terminus) with SSU72; this interaction is inhibited by SYMPK. Interacts with NR2F1; this interaction is direct. Interacts with PGR. Interacts with ESR1. Interacts with GTF2F1 (via C-terminus and preferentially via acetylated form); this interaction prevents binding of GTF2B to GTF2F2. Interacts with GTF2F2 (via N-terminus); this interaction is inhibited in presence of GTF2F1. Interacts with the transcription elongation factor TCEA2. Interacts with HSF1 (via transactivation domain). Interacts with GPBP1. Post-translationally, acetylated. Autoacetylated; autoacetylation at Lys-238 stimulates transcription activation.

The protein resides in the nucleus. It localises to the chromosome. The enzyme catalyses L-lysyl-[protein] + acetyl-CoA = N(6)-acetyl-L-lysyl-[protein] + CoA + H(+). Its function is as follows. General transcription factor that plays a role in transcription initiation by RNA polymerase II (Pol II). Involved in the pre-initiation complex (PIC) formation and Pol II recruitment at promoter DNA. Together with the TATA box-bound TBP forms the core initiation complex and provides a bridge between TBP and the Pol II-TFIIF complex. Released from the PIC early following the onset of transcription during the initiation and elongation transition and reassociates with TBP during the next transcription cycle. Associates with chromatin to core promoter-specific regions. Binds to two distinct DNA core promoter consensus sequence elements in a TBP-independent manner; these IIB-recognition elements (BREs) are localized immediately upstream (BREu), 5'-[GC][GC][GA]CGCC-3', and downstream (BREd), 5'-[GA]T[TGA][TG][GT][TG][TG]-3', of the TATA box element. Modulates transcription start site selection. Also exhibits autoacetyltransferase activity that contributes to the activated transcription. This is Transcription initiation factor IIB from Pongo abelii (Sumatran orangutan).